The sequence spans 54 residues: Defensin-like protein (54 aa).

Glutamine 1 carries the post-translational modification Pyrrolidone carboxylic acid. 4 cysteine pairs are disulfide-bonded: cysteine 4–cysteine 52, cysteine 16–cysteine 37, cysteine 22–cysteine 47, and cysteine 26–cysteine 49.

The protein belongs to the DEFL family. As to quaternary structure, monomer.

It is found in the secreted. Functionally, taste-modifying protein; sweet-tasting. It is 2000 sweeter than sucrose on a molar basis. In terms of biological role, has a pH-specific antimicrobial activity against bacteria (B.subtilis, E.coli and S.aureus) and the fungus C.albicans. This Pentadiplandra brazzeana protein is Defensin-like protein.